A 106-amino-acid chain; its full sequence is ATP-dependent Clp protease adapter protein ClpS (106 aa).

This sequence belongs to the ClpS family. As to quaternary structure, binds to the N-terminal domain of the chaperone ClpA.

Functionally, involved in the modulation of the specificity of the ClpAP-mediated ATP-dependent protein degradation. The protein is ATP-dependent Clp protease adapter protein ClpS of Pseudoalteromonas atlantica (strain T6c / ATCC BAA-1087).